We begin with the raw amino-acid sequence, 240 residues long: Mitochondrial transcription rescue factor 1 (240 aa).

The N-terminal 84 residues, 1 to 84, are a transit peptide targeting the mitochondrion; the sequence is MAMASVKLLA…ECIFPFSVRL (84 aa). The segment at 95–127 is disordered; it reads KKSLQKVDEEDSDEESHHDEMSEQEEELEDDPT. 2 positions are modified to phosphoserine: Ser106 and Ser116. Acidic residues predominate over residues 116–126; that stretch reads SEQEEELEDDP. In terms of domain architecture, S4 RNA-binding spans 142–217; it reads FRYDVVLKTG…LKKVFEEKTE (76 aa).

As to quaternary structure, monomer. Interacts with POLRMT. Interacts (via S4 domain) with MTRFR (via C-terminus). Associates with mitoribosomal S39 large subunit, peptidyl tRNA and nascent chain.

It is found in the mitochondrion matrix. In terms of biological role, mitochondrial RNA-binding protein involved in mitochondrial transcription regulation. Functions as a protective factor to maintain proper mitochondrial RNA level during stress. Acts at the transcription level and its protective function depends on its RNA binding ability. Part of a mitoribosome-associated quality control pathway that prevents aberrant translation by responding to interruptions during elongation. As heterodimer with MTRF, ejects the unfinished nascent chain and peptidyl transfer RNA (tRNA), respectively, from stalled ribosomes. Recruitment of mitoribosome biogenesis factors to these quality control intermediates suggests additional roles for MTRES1 and MTRF during mitoribosome rescue. The sequence is that of Mitochondrial transcription rescue factor 1 from Homo sapiens (Human).